The chain runs to 280 residues: AAKMAKNVDKPLFTATFNVQASSADYATFIAGIRNKLRNPAHFSHNEPVLPPVEPNVPPSRWFHVVLKASPTSAGLTLAIRADNIYLEGFKSSDGTWWELTPGLIPGATYVGFGGTYRDLLGDTDKLTNVALGRQQLEDAVTALHGRTKADKASGPKQQQAREAVTTLLLMVNEATRFQTVSGFVAGLLHPKAVEKKSGKIGNEMKAQVNGWQDLSAALLKTDVKPPPGKSPAKFTPIEKMGVRTAEQAAATLGILLFVEVPGGLTVAKALELFHASGGK.

An N-acetylalanine modification is found at Ala-1. Residue Glu-174 is part of the active site.

The protein belongs to the ribosome-inactivating protein family. Type 1 RIP subfamily.

Its subcellular location is the cytoplasm. The enzyme catalyses Endohydrolysis of the N-glycosidic bond at one specific adenosine on the 28S rRNA.. Its function is as follows. Inhibits the elongation phase of protein synthesis. It inactivates fungal ribosomes even more effectively than mammalian ribosomes and is thought to function as a constitutive antifungal agent in plants. The sequence is that of Protein synthesis inhibitor II (RIP30A) from Hordeum vulgare (Barley).